A 418-amino-acid polypeptide reads, in one-letter code: Thyroxine-binding globulin (418 aa).

The signal sequence occupies residues 1 to 20 (MSMFFYLFLLVLGLQATIHC). 6 N-linked (GlcNAc...) asparagine glycosylation sites follow: asparagine 24, asparagine 39, asparagine 102, asparagine 168, asparagine 227, and asparagine 256. Thyroxine-binding residues include asparagine 296 and lysine 401.

Belongs to the serpin family. Expressed by the liver and secreted in plasma.

The protein localises to the secreted. Major thyroid hormone transport protein in serum. This chain is Thyroxine-binding globulin (Serpina7), found in Rattus norvegicus (Rat).